Here is a 540-residue protein sequence, read N- to C-terminus: Putative cysteine ligase BshC (540 aa).

Residues 425–453 (IEKVEGMIEQQRRLNKDLLDEVAGNQNNI) adopt a coiled-coil conformation.

This sequence belongs to the BshC family.

Its function is as follows. Involved in bacillithiol (BSH) biosynthesis. May catalyze the last step of the pathway, the addition of cysteine to glucosamine malate (GlcN-Mal) to generate BSH. In Staphylococcus aureus (strain NCTC 8325 / PS 47), this protein is Putative cysteine ligase BshC.